Consider the following 361-residue polypeptide: (S)-coclaurine N-methyltransferase (361 aa).

S-adenosyl-L-methionine contacts are provided by Ser-101, Gly-139, Asn-163, Gln-167, Asp-189, Ile-190, and Val-205. Cys-336 is a catalytic residue.

This sequence belongs to the CFA/CMAS family. As to quaternary structure, homodimer. Highly expressed in rhizomes. Detected in roots, petioles, flower buds and leaves. Expressed between the developing stele and ground tissues near the root apical meristem, in the immature endodermis, the pericycle and the spokes of developing xylem in the apical region of the root and in the protoderm of leaf primordia in rhizomes.

Its subcellular location is the cytoplasm. The catalysed reaction is norreticuline + S-adenosyl-L-methionine = reticuline + S-adenosyl-L-homocysteine + H(+). It carries out the reaction (S)-coclaurine + S-adenosyl-L-methionine = (S)-N-methylcoclaurine + S-adenosyl-L-homocysteine + H(+). The enzyme catalyses heliamine + S-adenosyl-L-methionine = N-methylheliamine + S-adenosyl-L-homocysteine + H(+). It participates in alkaloid biosynthesis. Involved in the biosynthesis of protoberberine alkaloids. N-methyltransferase with a substrate preference for (R,S)-norreticuline but also active with dimethoxytetrahydroisoquinoline. The sequence is that of (S)-coclaurine N-methyltransferase from Thalictrum flavum subsp. glaucum (Yellow meadow rue).